A 145-amino-acid chain; its full sequence is D-aminoacyl-tRNA deacylase (145 aa).

The Gly-cisPro motif, important for rejection of L-amino acids signature appears at 137–138; it reads GP.

It belongs to the DTD family. In terms of assembly, homodimer.

It localises to the cytoplasm. It carries out the reaction glycyl-tRNA(Ala) + H2O = tRNA(Ala) + glycine + H(+). The catalysed reaction is a D-aminoacyl-tRNA + H2O = a tRNA + a D-alpha-amino acid + H(+). An aminoacyl-tRNA editing enzyme that deacylates mischarged D-aminoacyl-tRNAs. Also deacylates mischarged glycyl-tRNA(Ala), protecting cells against glycine mischarging by AlaRS. Acts via tRNA-based rather than protein-based catalysis; rejects L-amino acids rather than detecting D-amino acids in the active site. By recycling D-aminoacyl-tRNA to D-amino acids and free tRNA molecules, this enzyme counteracts the toxicity associated with the formation of D-aminoacyl-tRNA entities in vivo and helps enforce protein L-homochirality. This is D-aminoacyl-tRNA deacylase from Colwellia psychrerythraea (strain 34H / ATCC BAA-681) (Vibrio psychroerythus).